A 295-amino-acid polypeptide reads, in one-letter code: Ribosomal RNA small subunit methyltransferase A (295 aa).

Positions 31, 33, 58, 79, 104, and 129 each coordinate S-adenosyl-L-methionine.

Belongs to the class I-like SAM-binding methyltransferase superfamily. rRNA adenine N(6)-methyltransferase family. RsmA subfamily.

It is found in the cytoplasm. The catalysed reaction is adenosine(1518)/adenosine(1519) in 16S rRNA + 4 S-adenosyl-L-methionine = N(6)-dimethyladenosine(1518)/N(6)-dimethyladenosine(1519) in 16S rRNA + 4 S-adenosyl-L-homocysteine + 4 H(+). In terms of biological role, specifically dimethylates two adjacent adenosines (A1518 and A1519) in the loop of a conserved hairpin near the 3'-end of 16S rRNA in the 30S particle. May play a critical role in biogenesis of 30S subunits. The sequence is that of Ribosomal RNA small subunit methyltransferase A from Leuconostoc citreum (strain KM20).